The sequence spans 552 residues: Urocanate hydratase (552 aa).

NAD(+)-binding positions include 49-50 (GG), Gln-127, 173-175 (GMG), Asp-193, 239-240 (NA), 260-264 (QTSAH), 270-271 (YI), and Tyr-319. Cys-407 is an active-site residue. Gly-489 contributes to the NAD(+) binding site.

It belongs to the urocanase family. Requires NAD(+) as cofactor.

It is found in the cytoplasm. It catalyses the reaction 4-imidazolone-5-propanoate = trans-urocanate + H2O. Its pathway is amino-acid degradation; L-histidine degradation into L-glutamate; N-formimidoyl-L-glutamate from L-histidine: step 2/3. Its function is as follows. Catalyzes the conversion of urocanate to 4-imidazolone-5-propionate. The protein is Urocanate hydratase of Bacillus thuringiensis (strain Al Hakam).